A 459-amino-acid polypeptide reads, in one-letter code: Phosphomethylpyrimidine synthase (459 aa).

Substrate contacts are provided by residues Asn-80, Met-109, Tyr-139, His-175, 195 to 197 (SRG), 236 to 239 (DSLR), and Glu-275. Position 279 (His-279) interacts with Zn(2+). Tyr-302 serves as a coordination point for substrate. His-343 lines the Zn(2+) pocket. [4Fe-4S] cluster contacts are provided by Cys-423, Cys-426, and Cys-431.

It belongs to the ThiC family. Requires [4Fe-4S] cluster as cofactor.

The enzyme catalyses 5-amino-1-(5-phospho-beta-D-ribosyl)imidazole + S-adenosyl-L-methionine = 4-amino-2-methyl-5-(phosphooxymethyl)pyrimidine + CO + 5'-deoxyadenosine + formate + L-methionine + 3 H(+). It participates in cofactor biosynthesis; thiamine diphosphate biosynthesis. In terms of biological role, catalyzes the synthesis of the hydroxymethylpyrimidine phosphate (HMP-P) moiety of thiamine from aminoimidazole ribotide (AIR) in a radical S-adenosyl-L-methionine (SAM)-dependent reaction. This Prochlorococcus marinus (strain MIT 9211) protein is Phosphomethylpyrimidine synthase.